The chain runs to 407 residues: MVYNNLLERFIKYVKVNTRSNPTSQTTPSTQSQVDFALQVLKPEMEAIGLEDVHYLEHNGYIVGTLPANAQHLTRKIGFISHMDTADFNAEGINPQVIDNYEGGNITLGQSGYLLKPDDFPQLNNYLGQTLVTTDGTTLLGADDKSGIAEIMTAIEFLVANPTIEHCEIRVAFGPDEEIGTGANKFDVEDFNVDFAYTVDGGPLGELQYETFSAAGLDVQFLGRNVHPGTAKGQMINALQLAIDFHNQLPETDRPEKTDGYQGFYHLLDLSGTVEEASSSYIIRDFEDDSFKSRKAFIEQLAQKMNDELGENRVVISLQDQYYNMKKVIEKDMTPVNLAKEVMEDLDIKPIIEPIRGGTDGSKISFMGIPTPNIFAGGENMHGRFEFVSLETMEKAVDVILGIVQKP.

His-82 serves as a coordination point for Zn(2+). Asp-84 is an active-site residue. Asp-143 is a Zn(2+) binding site. Glu-177 (proton acceptor) is an active-site residue. Zn(2+) is bound by residues Glu-178, Asp-200, and His-382.

The protein belongs to the peptidase M20B family. It depends on Zn(2+) as a cofactor.

The protein localises to the cytoplasm. The catalysed reaction is Release of the N-terminal residue from a tripeptide.. In terms of biological role, cleaves the N-terminal amino acid of tripeptides. This is Peptidase T from Streptococcus uberis (strain ATCC BAA-854 / 0140J).